The chain runs to 2124 residues: AMB antimetabolite synthetase AmbE (2124 aa).

Residues 456–847 (LRAALQPQAP…LGRIDEQVKI (392 aa)) are adenylation. Positions 950–1147 (DVGANIGLFS…DLLRRHGFEV (198 aa)) are methyltransferase. The region spanning 1251 to 1325 (APANATEAAL…ELARLLAAPA (75 aa)) is the Carrier 1 domain. At S1286 the chain carries O-(pantetheine 4'-phosphoryl)serine. Positions 1359–1780 (DAYPMTSLQQ…ALLGDPVQPP (422 aa)) are condensation. In terms of domain architecture, Carrier 2 spans 1785-1859 (AEDSVELRRV…EVVRRCHAAD (75 aa)). The residue at position 1819 (S1819) is an O-(pantetheine 4'-phosphoryl)serine. The interval 1886–2107 (RLIALPPAGG…AAEEVCAILR (222 aa)) is thioesterase.

This sequence belongs to the NRP synthetase family. Pantetheine 4'-phosphate is required as a cofactor.

It catalyses the reaction holo-[peptidyl-carrier protein] + L-glutamate + ATP = L-glutamyl-[peptidyl-carrier protein] + AMP + diphosphate. Its function is as follows. Involved in the biosynthesis of the antimetabolite L-2-amino-4-methoxy-trans-3-butenoic acid (AMB), a non-proteinogenic amino acid which is toxic for prokaryotes and eukaryotes. Adenylates L-glutamate and loads it onto its first peptidyl carrier domain via a thioester linkage to the phosphopanthetheine moiety. The second peptidyl carrier domain is loaded with a L-alanine activated by AmbB. After formation by AmbB of the L-Glu-L-Ala dipeptide at the first carrier domain of AmbE, the condensation domain of AmbE probably condenses this dipeptide with the L-Ala residue attached at the second carrier domain of AmbE to give the L-Ala-L-Glu-L-Ala tripeptide. The central amino acid, L-Glu, would then undergo a series of modifications to be converted into AMB while the two flanking L-Ala residues remain in place. Finally, the L-Ala-AMB-L-Ala tripeptide is probably released by thioester cleavage via the thioester domain of AmbE. The chain is AMB antimetabolite synthetase AmbE from Pseudomonas aeruginosa (strain ATCC 15692 / DSM 22644 / CIP 104116 / JCM 14847 / LMG 12228 / 1C / PRS 101 / PAO1).